We begin with the raw amino-acid sequence, 101 residues long: Small ribosomal subunit protein uS14 (101 aa).

The interval 1 to 20 (MAKTSQVNRNKRREKMAARD) is disordered.

Belongs to the universal ribosomal protein uS14 family. As to quaternary structure, part of the 30S ribosomal subunit. Contacts proteins S3 and S10.

Binds 16S rRNA, required for the assembly of 30S particles and may also be responsible for determining the conformation of the 16S rRNA at the A site. This is Small ribosomal subunit protein uS14 from Acidiphilium cryptum (strain JF-5).